We begin with the raw amino-acid sequence, 283 residues long: MSTRRSSTRADSTTKRPASPNSTPNAALGIFVAIARQILFIDARKVALFYLAFVTVLSFIESRIELDSTYYLVQKHSVLNQYGVKMGWFWTLVIVGPFIWFSSKAHNRRDRDQPIVDVCRLGVGTACWYFSVQFFHKVLALTSMCDKGRTLTRAQCSEKEGVWTPGYDISGHCFLMIYSILIITEEAIAYRHYQQVTDAVHQMDGDREEHDRLTRCIQYFFVAMLFLHAFWFKQIIISVLYYHIFIEEILGAVAAVVCWFVTYRMLYPAGFLASPIRRTVGRK.

Positions 1 to 11 (MSTRRSSTRAD) are enriched in low complexity. Positions 1-21 (MSTRRSSTRADSTTKRPASPN) are disordered. Residues 1–39 (MSTRRSSTRADSTTKRPASPNSTPNAALGIFVAIARQIL) lie on the Cytoplasmic side of the membrane. Residues 40–60 (FIDARKVALFYLAFVTVLSFI) form a helical membrane-spanning segment. Over 61–81 (ESRIELDSTYYLVQKHSVLNQ) the chain is Lumenal. The helical transmembrane segment at 82–102 (YGVKMGWFWTLVIVGPFIWFS) threads the bilayer. The Cytoplasmic segment spans residues 103–120 (SKAHNRRDRDQPIVDVCR). The helical transmembrane segment at 121–141 (LGVGTACWYFSVQFFHKVLAL) threads the bilayer. The Lumenal portion of the chain corresponds to 142–168 (TSMCDKGRTLTRAQCSEKEGVWTPGYD). Residues 169-189 (ISGHCFLMIYSILIITEEAIA) form a helical membrane-spanning segment. The active site involves H172. Residues 190–219 (YRHYQQVTDAVHQMDGDREEHDRLTRCIQY) are Cytoplasmic-facing. 2 helical membrane-spanning segments follow: residues 220-240 (FFVA…ISVL) and 241-261 (YYHI…CWFV). H243 is an active-site residue. Topologically, residues 262–283 (TYRMLYPAGFLASPIRRTVGRK) are cytoplasmic.

This sequence belongs to the FIT family. FIT2 subfamily.

The protein resides in the endoplasmic reticulum membrane. It catalyses the reaction an acyl-CoA + H2O = an acyl-4'-phosphopantetheine + adenosine 3',5'-bisphosphate + 2 H(+). In terms of biological role, fatty acyl-coenzyme A (CoA) diphosphatase that hydrolyzes fatty acyl-CoA to yield acyl-4'-phosphopantetheine and adenosine 3',5'-bisphosphate. Preferentially hydrolyzes unsaturated long-chain acyl-CoA substrates in the endoplasmic reticulum (ER) lumen. This catalytic activity is required for maintaining ER structure and for lipid droplets (LDs) biogenesis, which are lipid storage organelles involved in maintaining lipid and energy homeostasis. May directly bind to diacylglycerol (DAGs) and triacylglycerol, which is also important for LD biogenesis. May support directional budding of nacent LDs from the ER into the cytosol by reducing DAG levels at sites of LD formation. May play a role in the regulation of cell morphology, ER morphology and cytoskeletal organization. The protein is Acyl-coenzyme A diphosphatase FITM2 of Caenorhabditis elegans.